The following is a 334-amino-acid chain: Sulfhydrogenase 2 subunit beta (334 aa).

2 4Fe-4S ferredoxin-type domains span residues 220 to 250 (KVWK…VCDT) and 294 to 328 (CKNY…VLDE). Cys229, Cys232, Cys235, Cys239, Cys306, Cys309, Cys312, and Cys316 together coordinate [4Fe-4S] cluster.

In terms of assembly, dimer of heterotetramer of alpha, beta, gamma and delta subunits. The nickel-containing alpha and delta subunits constitute the hydrogenase activity. The beta and gamma subunits (flavin-containing dimer) constitute the sulfur reductase activity. [4Fe-4S] cluster is required as a cofactor.

It is found in the cytoplasm. The enzyme catalyses n sulfur + H2 = (n-1) sulfur + hydrogen sulfide + H(+). Part of a bifunctional enzyme complex that functions as a hydrogen-evolving hydrogenase with sulfur-reducing activity. May play a role in hydrogen cycling during fermentative growth. Activity exhibited with NAD in addition to NADPH. The beta and gamma subunits form the sulfur-reducing component that catalyzes the cytoplasmic production of hydrogen sulfide in the presence of elemental sulfur. This is Sulfhydrogenase 2 subunit beta from Pyrococcus furiosus (strain ATCC 43587 / DSM 3638 / JCM 8422 / Vc1).